The sequence spans 158 residues: 6,7-dimethyl-8-ribityllumazine synthase (158 aa).

5-amino-6-(D-ribitylamino)uracil-binding positions include Phe22, 57–59 (SYE), and 81–83 (TVI). The Proton donor role is filled by His89. 5-amino-6-(D-ribitylamino)uracil is bound at residue Phe114. Arg128 lines the (2S)-2-hydroxy-3-oxobutyl phosphate pocket.

The protein belongs to the DMRL synthase family. Forms an icosahedral capsid composed of 60 subunits, arranged as a dodecamer of pentamers.

It carries out the reaction (2S)-2-hydroxy-3-oxobutyl phosphate + 5-amino-6-(D-ribitylamino)uracil = 6,7-dimethyl-8-(1-D-ribityl)lumazine + phosphate + 2 H2O + H(+). It participates in cofactor biosynthesis; riboflavin biosynthesis; riboflavin from 2-hydroxy-3-oxobutyl phosphate and 5-amino-6-(D-ribitylamino)uracil: step 1/2. Functionally, catalyzes the formation of 6,7-dimethyl-8-ribityllumazine by condensation of 5-amino-6-(D-ribitylamino)uracil with 3,4-dihydroxy-2-butanone 4-phosphate. This is the penultimate step in the biosynthesis of riboflavin. This is 6,7-dimethyl-8-ribityllumazine synthase from Blochmanniella pennsylvanica (strain BPEN).